A 478-amino-acid polypeptide reads, in one-letter code: Alpha-1,3-mannosyl-glycoprotein 4-beta-N-acetylglucosaminyltransferase C (478 aa).

At 1–25 (MLKFYQMKYIFQILDKMRCLRKRST) the chain is on the cytoplasmic side. A helical; Signal-anchor for type II membrane protein transmembrane segment spans residues 26 to 43 (VSFLGVLVVFLLFMNLYI). Over 44-478 (EDSYVLEGDK…IIRSISIWTS (435 aa)) the chain is Lumenal. N-linked (GlcNAc...) asparagine glycosylation is found at Asn-84 and Asn-215.

Belongs to the glycosyltransferase 54 family. A divalent metal cation is required as a cofactor.

The protein localises to the golgi apparatus membrane. It carries out the reaction N(4)-{beta-D-GlcNAc-(1-&gt;2)-alpha-D-Man-(1-&gt;3)-[beta-D-GlcNAc-(1-&gt;2)-alpha-D-Man-(1-&gt;6)]-beta-D-Man-(1-&gt;4)-beta-D-GlcNAc-(1-&gt;4)-beta-D-GlcNAc}-L-asparaginyl-[protein] + UDP-N-acetyl-alpha-D-glucosamine = N(4)-{beta-D-GlcNAc-(1-&gt;2)-[beta-D-GlcNAc-(1-&gt;4)]-alpha-D-Man-(1-&gt;3)-[beta-D-GlcNAc-(1-&gt;2)-alpha-D-Man-(1-&gt;6)]-beta-D-Man-(1-&gt;4)-beta-D-GlcNAc-(1-&gt;4)-beta-D-GlcNAc}-L-asparaginyl-[protein] + UDP + H(+). Its pathway is protein modification; protein glycosylation. In terms of biological role, glycosyltransferase that participates in the transfer of N-acetylglucosamine (GlcNAc) to the core mannose residues of N-linked glycans. Catalyzes the formation of the GlcNAcbeta1-4 branch on the GlcNAcbeta1-2Manalpha1-3 arm of the core structure of N-linked glycans. Essential for the production of tri- and tetra-antennary N-linked sugar chains. Does not catalyze the transfer of GlcNAc to the Manalpha1-6 arm to form GlcNAcBeta1-4Manalpha1-6 linkage ('GnT-VI' activity). This Mus musculus (Mouse) protein is Alpha-1,3-mannosyl-glycoprotein 4-beta-N-acetylglucosaminyltransferase C (Mgat4c).